The primary structure comprises 192 residues: Cytidylate kinase (192 aa).

ATP is bound at residue 12-20 (GLAGSGTTT).

The protein belongs to the cytidylate kinase family. Type 2 subfamily.

It localises to the cytoplasm. The enzyme catalyses CMP + ATP = CDP + ADP. It catalyses the reaction dCMP + ATP = dCDP + ADP. In Pyrococcus furiosus (strain ATCC 43587 / DSM 3638 / JCM 8422 / Vc1), this protein is Cytidylate kinase.